Here is a 172-residue protein sequence, read N- to C-terminus: Cytidylate kinase (172 aa).

4–12 contributes to the ATP binding site; that stretch reads GPPGSGKST.

Belongs to the cytidylate kinase family. Type 2 subfamily.

It is found in the cytoplasm. The enzyme catalyses CMP + ATP = CDP + ADP. The catalysed reaction is dCMP + ATP = dCDP + ADP. The sequence is that of Cytidylate kinase (cmk) from Aeropyrum pernix (strain ATCC 700893 / DSM 11879 / JCM 9820 / NBRC 100138 / K1).